The following is a 284-amino-acid chain: Protease HtpX (284 aa).

A run of 2 helical transmembrane segments spans residues 4-24 (ILLF…ILSL) and 33-53 (MGLL…SLLM). A Zn(2+)-binding site is contributed by His139. Glu140 is an active-site residue. His143 lines the Zn(2+) pocket. 2 helical membrane-spanning segments follow: residues 147 to 167 (GDMV…IFAA) and 187 to 207 (IYFL…SMIA). Glu215 is a Zn(2+) binding site.

Belongs to the peptidase M48B family. Zn(2+) is required as a cofactor.

It is found in the cell inner membrane. This Mannheimia succiniciproducens (strain KCTC 0769BP / MBEL55E) protein is Protease HtpX.